Consider the following 555-residue polypeptide: Disabled homolog 1 (555 aa).

The interval 1 to 26 is disordered; it reads MSTETELQVAVKTSAKKDSRKKGQDR. Basic and acidic residues predominate over residues 15–26; sequence AKKDSRKKGQDR. The PID domain occupies 36-189; sequence KGEGVRYKAK…CEQAVYQTIL (154 aa). Tyrosine 198, tyrosine 220, and tyrosine 232 each carry phosphotyrosine. Disordered regions lie at residues 384-410, 418-437, and 468-555; these read LTPL…RQKM, FQMA…PSLT, and NLTP…QAGS. Residues 391–403 are compositionally biased toward polar residues; the sequence is PGTSDSTRPSPQT. 2 stretches are compositionally biased toward low complexity: residues 470–479 and 487–501; these read TPVTSTTPST and PRQS…SHAS. Serine 491 is subject to Phosphoserine; by CDK5. Residues 504 to 513 are compositionally biased toward acidic residues; the sequence is TTDDIFEEGF.

Associates with the SH2 domains of SRC, FYN and ABL. Interacts (phosphorylated on tyrosine residues) with CRK and CRKL (via respective SH2 domain). Interacts with DAB2IP, SIAH1, LRP8 and VLDLR. Interacts with LRP1. Interacts with APLP1 (via NPXY motif). Interacts with DAB2IP. Interacts with ZSWIM8. Phosphorylated by FYN on Tyr-198 and Tyr-220 upon reelin induction in embryonic neurons. Also phosphorylated on Ser-491 independently of reelin signaling. Post-translationally, ubiquitinated by various cullin-5-RING E3 ubiquitin-protein ligase complexes (ECS complexes) following ligand-binding and phosphorylation, leading to its degradation. Ubiquitinated by the ECS(SOCS7) complex in the cortical plate of the developing cerebral cortex following ligand-binding and phosphorylation by FYN, leading to its degradation by the proteasome. Recognized by ZSWIM8 through a disorder targets misorder mechanism that eliminates misfolded DAB1 via ubiquitination and proteasomal degradation.

It is found in the cytoplasm. Its function is as follows. Signaling adapter of the reelin-mediated signaling pathway, which regulates the migration and differentiation of postmitotic neurons during brain development. Mediates intracellular transduction of Reelin signaling following reelin (RELN)-binding to its receptor: acts by docking proteins through its phosphotyrosine residues and PID domain. This Macaca fascicularis (Crab-eating macaque) protein is Disabled homolog 1 (DAB1).